The following is a 365-amino-acid chain: tRNA(Met) cytidine acetate ligase (365 aa).

Residues I7 to L20, G96, N152, and R175 contribute to the ATP site.

It belongs to the TmcAL family.

It localises to the cytoplasm. It catalyses the reaction cytidine(34) in elongator tRNA(Met) + acetate + ATP = N(4)-acetylcytidine(34) in elongator tRNA(Met) + AMP + diphosphate. Its function is as follows. Catalyzes the formation of N(4)-acetylcytidine (ac(4)C) at the wobble position of elongator tRNA(Met), using acetate and ATP as substrates. First activates an acetate ion to form acetyladenylate (Ac-AMP) and then transfers the acetyl group to tRNA to form ac(4)C34. This Streptococcus pneumoniae serotype 19F (strain G54) protein is tRNA(Met) cytidine acetate ligase.